The primary structure comprises 64 residues: Large ribosomal subunit protein bL28 (64 aa).

It belongs to the bacterial ribosomal protein bL28 family.

This Bifidobacterium longum (strain NCC 2705) protein is Large ribosomal subunit protein bL28.